The sequence spans 304 residues: GDP-6-deoxy-D-mannose reductase (304 aa).

NADP(+)-binding positions include 13-14 (FV) and 39-40 (DL). A substrate-binding site is contributed by 105–106 (SG). Residue Y131 coordinates NADP(+). Substrate contacts are provided by residues N160, R200, and 260–263 (RRAE).

It belongs to the NAD(P)-dependent epimerase/dehydratase family. GDP-6-deoxy-D-mannose reductase subfamily.

It carries out the reaction GDP-alpha-D-rhamnose + NAD(+) = GDP-4-dehydro-alpha-D-rhamnose + NADH + H(+). It catalyses the reaction GDP-alpha-D-rhamnose + NADP(+) = GDP-4-dehydro-alpha-D-rhamnose + NADPH + H(+). Its function is as follows. Reductase that catalyzes the conversion of GDP-6-deoxy-D-mannose to GDP-4-dehydro-6-deoxy-D-mannose (GDP-D-rhamnose). The chain is GDP-6-deoxy-D-mannose reductase (rmd) from Pseudomonas aeruginosa (strain ATCC 15692 / DSM 22644 / CIP 104116 / JCM 14847 / LMG 12228 / 1C / PRS 101 / PAO1).